Reading from the N-terminus, the 662-residue chain is Threonine--tRNA ligase (662 aa).

One can recognise a TGS domain in the interval 1–64 (MSQSVSLTFP…ADGKIEIITR (64 aa)). The catalytic stretch occupies residues 245-547 (DHRRLGREMD…LIENFAGHMP (303 aa)). Residues Cys-341, His-392, and His-524 each coordinate Zn(2+).

The protein belongs to the class-II aminoacyl-tRNA synthetase family. In terms of assembly, homodimer. The cofactor is Zn(2+).

The protein resides in the cytoplasm. The catalysed reaction is tRNA(Thr) + L-threonine + ATP = L-threonyl-tRNA(Thr) + AMP + diphosphate + H(+). Catalyzes the attachment of threonine to tRNA(Thr) in a two-step reaction: L-threonine is first activated by ATP to form Thr-AMP and then transferred to the acceptor end of tRNA(Thr). Also edits incorrectly charged L-seryl-tRNA(Thr). The protein is Threonine--tRNA ligase of Rhizobium rhizogenes (strain K84 / ATCC BAA-868) (Agrobacterium radiobacter).